Consider the following 232-residue polypeptide: tRNA-uridine aminocarboxypropyltransferase (232 aa).

4 residues coordinate Zn(2+): Cys31, Cys34, Cys41, and Cys43. Positions 137 to 140 (DGTW) match the DXTW motif.

It belongs to the TDD superfamily. DTWD2 family. TapT subfamily. As to quaternary structure, monomer in solution.

The enzyme catalyses a uridine in tRNA + S-adenosyl-L-methionine = a 3-[(3S)-3-amino-3-carboxypropyl]uridine in tRNA + S-methyl-5'-thioadenosine + H(+). It carries out the reaction uridine(47) in tRNA(Phe) + S-adenosyl-L-methionine = 3-[(3S)-3-amino-3-carboxypropyl]uridine(47) in tRNA(Phe) + S-methyl-5'-thioadenosine + H(+). With respect to regulation, the degree of the acp3U modification at U47 is dependent on the presence of the m7G modification at the preceding nucleotide G46. It also depends on medium conditions. In terms of biological role, catalyzes the formation of 3-(3-amino-3-carboxypropyl)uridine (acp3U) at position 47 of tRNAs. Acp3U47 confers thermal stability on tRNA. This is tRNA-uridine aminocarboxypropyltransferase from Escherichia coli (strain K12).